The primary structure comprises 425 residues: Serine--tRNA ligase (425 aa).

Position 233–235 (233–235 (TAE)) interacts with L-serine. Residue 264 to 266 (RAE) coordinates ATP. Position 287 (glutamate 287) interacts with L-serine. 351–354 (EISS) is a binding site for ATP. Serine 387 is a binding site for L-serine.

Belongs to the class-II aminoacyl-tRNA synthetase family. Type-1 seryl-tRNA synthetase subfamily. Homodimer. The tRNA molecule binds across the dimer.

The protein localises to the cytoplasm. It carries out the reaction tRNA(Ser) + L-serine + ATP = L-seryl-tRNA(Ser) + AMP + diphosphate + H(+). It catalyses the reaction tRNA(Sec) + L-serine + ATP = L-seryl-tRNA(Sec) + AMP + diphosphate + H(+). It participates in aminoacyl-tRNA biosynthesis; selenocysteinyl-tRNA(Sec) biosynthesis; L-seryl-tRNA(Sec) from L-serine and tRNA(Sec): step 1/1. Functionally, catalyzes the attachment of serine to tRNA(Ser). Is also able to aminoacylate tRNA(Sec) with serine, to form the misacylated tRNA L-seryl-tRNA(Sec), which will be further converted into selenocysteinyl-tRNA(Sec). The polypeptide is Serine--tRNA ligase (Clostridium botulinum (strain Eklund 17B / Type B)).